The following is a 403-amino-acid chain: Creatinase (403 aa).

Residue histidine 232 is part of the active site.

The protein belongs to the peptidase M24 family. Creatinase subfamily. As to quaternary structure, homodimer.

The catalysed reaction is creatine + H2O = sarcosine + urea. The chain is Creatinase from Pseudomonas putida (Arthrobacter siderocapsulatus).